Consider the following 521-residue polypeptide: Cysteine protease atg-4.2 (521 aa).

Residues 90–100 (MMGSIRPSSSS) are compositionally biased toward low complexity. Residues 90 to 109 (MMGSIRPSSSSQDVHSTGEI) form a disordered region. C203 serves as the catalytic Nucleophile. Catalysis depends on residues D394 and H396. The disordered stretch occupies residues 499-521 (PSYEREVSETEQAQADKHGFEML).

Belongs to the peptidase C54 family.

It is found in the cytoplasm. The enzyme catalyses [protein]-C-terminal L-amino acid-glycyl-phosphatidylethanolamide + H2O = [protein]-C-terminal L-amino acid-glycine + a 1,2-diacyl-sn-glycero-3-phosphoethanolamine. Cysteine protease required for autophagy. Cleaves the C-terminal amino acid of ATG8 family proteins lgg-1, to reveal a C-terminal glycine. Exposure of the glycine at the C-terminus is essential for ATG8 proteins conjugation to phosphatidylethanolamine (PE) and insertion to membranes, which is necessary for autophagy. Its cleavage activity is functionally redundant to atg-4.1, but it cleaves lgg-1 precursors less efficiently than atg-4.1. In contrast to atg-4.1, plays a more significant role in the later phases of autophagy and in addition has a role in autophagosome maturation. Acts redundantly with atg-4.1 to promote the lgg-1 delipidation to release the protein from membranes, which facilitates multiple events during macroautophagy. Regulates the accumulation of autophagic structures in neurons and is specifically, required for the maturation and elimination of autophagosomes from the synaptic region of AIY interneurons. The sequence is that of Cysteine protease atg-4.2 from Caenorhabditis elegans.